Consider the following 300-residue polypeptide: Transcriptional dual regulator GltC (300 aa).

The 58-residue stretch at 1–58 (MELRQLRYFMEVAEREHVSEAADHLHVAQSAISRQIANLEEELNVTLFEREGRNIKLT) folds into the HTH lysR-type domain. The H-T-H motif DNA-binding region spans 18 to 37 (VSEAADHLHVAQSAISRQIA).

This sequence belongs to the LysR transcriptional regulatory family. In terms of assembly, interacts with gutamate dehydrogenase RocG.

Its activity is regulated as follows. Activated by alpha-ketoglutarate and inhibited by glutamate and by RocG. Its function is as follows. Positive regulator of glutamate biosynthesis (gltAB genes). Negatively regulates its own expression. The polypeptide is Transcriptional dual regulator GltC (gltC) (Bacillus subtilis (strain 168)).